The sequence spans 461 residues: Argininosuccinate lyase (461 aa).

Ser-28, Asn-115, and Thr-160 together coordinate 2-(N(omega)-L-arginino)succinate. His-161 functions as the Proton acceptor in the catalytic mechanism. Ser-282 functions as the Proton donor in the catalytic mechanism. Residues Asn-290, Tyr-322, Gln-327, and Lys-330 each contribute to the 2-(N(omega)-L-arginino)succinate site.

It belongs to the lyase 1 family. Argininosuccinate lyase subfamily. Homotetramer.

The enzyme catalyses 2-(N(omega)-L-arginino)succinate = fumarate + L-arginine. Its pathway is amino-acid biosynthesis; L-arginine biosynthesis; L-arginine from L-ornithine and carbamoyl phosphate: step 3/3. The polypeptide is Argininosuccinate lyase (arg7) (Schizosaccharomyces pombe (strain 972 / ATCC 24843) (Fission yeast)).